Reading from the N-terminus, the 362-residue chain is Mortality factor 4-like protein 1 (362 aa).

A Tudor-knot domain is found at Gln12 to Lys51. The interval Tyr26–Lys62 is interaction with KAT8. The interval Arg113 to Thr182 is disordered. Residues Pro133–Val266 are sufficient for interaction with SIN3A. The Nuclear localization signal signature appears at Lys135–Glu146. At Lys143 the chain carries N6-acetyllysine. Residues Ser164–Asp230 are interaction with RB1-1. The tract at residues Thr188 to Ala342 is sufficient for interaction with PHF12. The MRG domain occupies Asn191 to Val362. The interval Leu323–Leu344 is interaction with RB1-2.

Component of the NuA4 histone acetyltransferase complex which contains the catalytic subunit KAT5/TIP60 and the subunits EP400, TRRAP/PAF400, BRD8/SMAP, EPC1, DMAP1/DNMAP1, RUVBL1/TIP49, RUVBL2, ING3, actin, ACTL6A/BAF53A, MORF4L1/MRG15, MORF4L2/MRGX, MRGBP, YEATS4/GAS41, VPS72/YL1 and MEAF6. The NuA4 complex interacts with MYC and the adenovirus E1A protein. MORF4L1 may also participate in the formation of NuA4 related complexes which lack the KAT5/TIP60 catalytic subunit, but which include the SWI/SNF related protein SRCAP. Component of the mSin3A histone deacetylase complex, which includes SIN3A, HDAC2, ARID4B, MORF4L1, RBBP4/RbAp48, and RBBP7/RbAp46. May also interact with PHF12 and one or more as yet undefined members of the TLE (transducin-like enhancer of split) family of transcriptional repressors. Component of the SIN3B complex, which includes SIN3B, HDAC2 or HDAC1, PHF12 and MORF4L1. Interacts with RB1 and KAT8. Interacts with the N-terminus of MRFAP1. Found in a complex composed of MORF4L1, MRFAP1 and RB1. Interacts with the entire BRCA complex, which contains BRCA1, PALB2, BRCA2 and RAD51. Interacts with PALB2. Forms a complex with MSL1 and NUPR1.

It is found in the nucleus. In terms of biological role, component of the NuA4 histone acetyltransferase (HAT) complex which is involved in transcriptional activation of select genes principally by acetylation of nucleosomal histones H4 and H2A. This modification may both alter nucleosome - DNA interactions and promote interaction of the modified histones with other proteins which positively regulate transcription. This complex may be required for the activation of transcriptional programs associated with oncogene and proto-oncogene mediated growth induction, tumor suppressor mediated growth arrest and replicative senescence, apoptosis, and DNA repair. The NuA4 complex ATPase and helicase activities seem to be, at least in part, contributed by the association of RUVBL1 and RUVBL2 with EP400. NuA4 may also play a direct role in DNA repair when directly recruited to sites of DNA damage. As part of the SIN3B complex represses transcription and counteracts the histone acetyltransferase activity of EP300 through the recognition H3K27ac marks by PHF12 and the activity of the histone deacetylase HDAC2. SIN3B complex is recruited downstream of the constitutively active genes transcriptional start sites through interaction with histones and mitigates histone acetylation and RNA polymerase II progression within transcribed regions contributing to the regulation of transcription. Required for homologous recombination repair (HRR) and resistance to mitomycin C (MMC). Involved in the localization of PALB2, BRCA2 and RAD51, but not BRCA1, to DNA-damage foci. This Homo sapiens (Human) protein is Mortality factor 4-like protein 1.